The sequence spans 263 residues: tRNA pseudouridine synthase A (263 aa).

Aspartate 51 functions as the Nucleophile in the catalytic mechanism. Residue tyrosine 109 participates in substrate binding.

It belongs to the tRNA pseudouridine synthase TruA family. As to quaternary structure, homodimer.

The enzyme catalyses uridine(38/39/40) in tRNA = pseudouridine(38/39/40) in tRNA. Its function is as follows. Formation of pseudouridine at positions 38, 39 and 40 in the anticodon stem and loop of transfer RNAs. The polypeptide is tRNA pseudouridine synthase A (Mannheimia succiniciproducens (strain KCTC 0769BP / MBEL55E)).